The following is a 197-amino-acid chain: Recombination protein RecR (197 aa).

The C4-type zinc finger occupies 56 to 71 (CKRCGSYAETEICNIC). The region spanning 79-174 (HTFCVVEQPE…DVTRIAYGIT (96 aa)) is the Toprim domain.

The protein belongs to the RecR family.

May play a role in DNA repair. It seems to be involved in an RecBC-independent recombinational process of DNA repair. It may act with RecF and RecO. The chain is Recombination protein RecR from Leptospira borgpetersenii serovar Hardjo-bovis (strain JB197).